Consider the following 209-residue polypeptide: MFLKYCGFQTQDDIKYAVEQHIDAIGFIHYPKSKRHQSIDEIEILSNLVPDTIYRVAVVVNPTDDIINQLLSRTNINAIQFHGDEDREMLRWCKNKYPDVKIIKALPADDTLSKRIQQYKEEADLFIIDTPSIHYGGTGQSFDWQVLEEIQDVPYLVAGGMTKEKIQQFEALHLNAAGYDIASGIETNGSKDPMKMKEISEYIKGEKQI.

It belongs to the TrpF family.

The enzyme catalyses N-(5-phospho-beta-D-ribosyl)anthranilate = 1-(2-carboxyphenylamino)-1-deoxy-D-ribulose 5-phosphate. It functions in the pathway amino-acid biosynthesis; L-tryptophan biosynthesis; L-tryptophan from chorismate: step 3/5. The protein is N-(5'-phosphoribosyl)anthranilate isomerase of Staphylococcus carnosus (strain TM300).